The chain runs to 249 residues: Probable transglycosylase SceD 2 (249 aa).

Positions Met-1–Ala-27 are cleaved as a signal peptide. Low complexity-rich tracts occupy residues Trp-80–Glu-95 and Gln-103–Ser-171. The tract at residues Trp-80–Gln-203 is disordered. Composition is skewed to polar residues over residues Gly-172–Gln-182 and Thr-192–Gln-203.

This sequence belongs to the transglycosylase family. SceD subfamily.

The protein localises to the secreted. Functionally, is able to cleave peptidoglycan and affects clumping and separation of bacterial cells. This chain is Probable transglycosylase SceD 2 (sceD2), found in Staphylococcus saprophyticus subsp. saprophyticus (strain ATCC 15305 / DSM 20229 / NCIMB 8711 / NCTC 7292 / S-41).